A 152-amino-acid chain; its full sequence is Transcriptional regulator MraZ (152 aa).

2 SpoVT-AbrB domains span residues 5–52 and 81–124; these read ASAI…PIHE and AHEV…DEQS.

Belongs to the MraZ family. In terms of assembly, forms oligomers.

The protein resides in the cytoplasm. It localises to the nucleoid. The chain is Transcriptional regulator MraZ from Shewanella baltica (strain OS195).